A 474-amino-acid chain; its full sequence is Glycogen synthase (474 aa).

Residue lysine 12 participates in ADP-alpha-D-glucose binding.

This sequence belongs to the glycosyltransferase 1 family. Bacterial/plant glycogen synthase subfamily.

The catalysed reaction is [(1-&gt;4)-alpha-D-glucosyl](n) + ADP-alpha-D-glucose = [(1-&gt;4)-alpha-D-glucosyl](n+1) + ADP + H(+). It participates in glycan biosynthesis; glycogen biosynthesis. Functionally, synthesizes alpha-1,4-glucan chains using ADP-glucose. The protein is Glycogen synthase of Xanthomonas campestris pv. campestris (strain 8004).